The sequence spans 125 residues: Small ribosomal subunit protein uS12m (125 aa).

The segment at 1–27 is disordered; sequence MPTKNQLIRHGREEKRRTDRTRALDQC. The segment covering 10 to 23 has biased composition (basic and acidic residues); sequence HGREEKRRTDRTRA.

It belongs to the universal ribosomal protein uS12 family.

It localises to the mitochondrion. Protein S12 is involved in the translation initiation step. This chain is Small ribosomal subunit protein uS12m (RPS12), found in Triticum aestivum (Wheat).